Here is a 213-residue protein sequence, read N- to C-terminus: Octanoyltransferase (213 aa).

Positions 32–207 (NSTLDEIWLV…NILALLNNPD (176 aa)) constitute a BPL/LPL catalytic domain. Substrate-binding positions include 71–78 (RGGQVTYH), 138–140 (SLG), and 151–153 (GLA). The Acyl-thioester intermediate role is filled by cysteine 169.

This sequence belongs to the LipB family.

The protein localises to the cytoplasm. The catalysed reaction is octanoyl-[ACP] + L-lysyl-[protein] = N(6)-octanoyl-L-lysyl-[protein] + holo-[ACP] + H(+). It functions in the pathway protein modification; protein lipoylation via endogenous pathway; protein N(6)-(lipoyl)lysine from octanoyl-[acyl-carrier-protein]: step 1/2. Functionally, catalyzes the transfer of endogenously produced octanoic acid from octanoyl-acyl-carrier-protein onto the lipoyl domains of lipoate-dependent enzymes. Lipoyl-ACP can also act as a substrate although octanoyl-ACP is likely to be the physiological substrate. This chain is Octanoyltransferase, found in Shigella flexneri serotype 5b (strain 8401).